The following is a 539-amino-acid chain: Keratin, type II cytoskeletal 73 (539 aa).

Residues 1–130 (MNRQFTCKPG…DPEIQKVRAQ (130 aa)) form a head region. Residues 131 to 166 (EREQIKALNNKFASFIDKVRFLEQQNQVLQTKWELL) are coil 1A. Residues 131–444 (EREQIKALNN…KLLEGEECRM (314 aa)) enclose the IF rod domain. Residues 167–185 (QQLDLSNCRRNLEPVYEAH) are linker 1. Residues 186–277 (ISSLQKQLDS…CLYEGEITQM (92 aa)) form a coil 1B region. The interval 278–301 (QSHISDTSVVLSMDNNRNLDLDSI) is linker 12. The interval 302-440 (IAEVRAQYED…ATYRKLLEGE (139 aa)) is coil 2. The tail stretch occupies residues 441 to 539 (ECRMSGEHTS…LGSPSKKTMR (99 aa)).

Belongs to the intermediate filament family. Heterotetramer of two type I and two type II keratins.

Its function is as follows. Has a role in hair formation. Specific component of keratin intermediate filaments in the inner root sheath (IRS) of the hair follicle. The protein is Keratin, type II cytoskeletal 73 (Krt73) of Mus musculus (Mouse).